A 194-amino-acid chain; its full sequence is Peroxiredoxin 2 (194 aa).

The Thioredoxin domain maps to 2 to 160; sequence PQLQKPAPAF…TLRLVQAFQY (159 aa). The active-site Cysteine sulfenic acid (-SOH) intermediate is the Cys47. Thr193 is modified (phosphothreonine). Ser194 bears the Phosphoserine mark.

This sequence belongs to the peroxiredoxin family. AhpC/Prx1 subfamily. Homodimer; disulfide-linked, upon oxidation. 5 homodimers assemble to form a ring-like decamer. Also exists as a monomer. In terms of processing, the enzyme can be inactivated by further oxidation of the cysteine sulfenic acid (C(P)-SOH) to sulphinic acid (C(P)-SO2H) instead of its condensation to a disulfide bond. It can be reactivated by forming a transient disulfide bond with sulfiredoxin SRXN1, which reduces the cysteine sulfinic acid in an ATP- and Mg-dependent manner. Post-translationally, conjugated to URM1, a ubiquitin-like protein. As to expression, detected in the head and body (at protein level).

The protein resides in the cytoplasm. It catalyses the reaction a hydroperoxide + [thioredoxin]-dithiol = an alcohol + [thioredoxin]-disulfide + H2O. In terms of biological role, thiol-specific peroxidase that catalyzes the reduction of hydrogen peroxide and organic hydroperoxides to water and alcohols, respectively. Plays a role in cell protection against oxidative stress by detoxifying peroxides and as sensor of hydrogen peroxide-mediated signaling events. Might participate in the signaling cascades of growth factors and tumor necrosis factor-alpha by regulating the intracellular concentrations of H(2)O(2). Reduces an intramolecular disulfide bond in GDPD5 that gates the ability to GDPD5 to drive postmitotic motor neuron differentiation. In Drosophila melanogaster (Fruit fly), this protein is Peroxiredoxin 2.